Consider the following 217-residue polypeptide: Thiopurine S-methyltransferase (217 aa).

4 residues coordinate S-adenosyl-L-methionine: tryptophan 10, leucine 45, glutamate 66, and arginine 123.

Belongs to the class I-like SAM-binding methyltransferase superfamily. TPMT family.

It localises to the cytoplasm. The enzyme catalyses S-adenosyl-L-methionine + a thiopurine = S-adenosyl-L-homocysteine + a thiopurine S-methylether.. The polypeptide is Thiopurine S-methyltransferase (Pseudomonas fluorescens (strain Pf0-1)).